A 447-amino-acid chain; its full sequence is Putative branched-chain amino acid carrier protein SERP0977 (447 aa).

Transmembrane regions (helical) follow at residues 5 to 25 (TWII…LIFP), 40 to 60 (ILAF…VGAL), 74 to 94 (PRFS…LFAI), 114 to 134 (GNLA…YLCL), 143 to 163 (IGSL…IKGF), 193 to 213 (GYLT…VNAI), 229 to 249 (IIAG…LGYI), 290 to 310 (LLGI…IVSV), 317 to 337 (IIPK…SFIL), 350 to 370 (VPVL…ILIA), 382 to 402 (IPLI…QGWI), and 417 to 437 (LEWF…SYFV).

Belongs to the branched chain amino acid transporter family.

It localises to the cell membrane. Functionally, component of the transport system for branched-chain amino acids (leucine, isoleucine and valine), which is coupled to a proton motive force. This chain is Putative branched-chain amino acid carrier protein SERP0977, found in Staphylococcus epidermidis (strain ATCC 35984 / DSM 28319 / BCRC 17069 / CCUG 31568 / BM 3577 / RP62A).